Consider the following 326-residue polypeptide: MEMO1 family protein TTHA0924 (326 aa).

Belongs to the MEMO1 family.

The chain is MEMO1 family protein TTHA0924 from Thermus thermophilus (strain ATCC 27634 / DSM 579 / HB8).